The chain runs to 605 residues: Sorting nexin MVP1 (605 aa).

2 disordered regions span residues 113–147 (PMDF…LDDH) and 175–213 (EEQE…SGVW). The span at 123-138 (SSINFSASTTGRSQTP) shows a compositional bias: polar residues. Positions 180–193 (LQQSQLSQSQLSRS) are enriched in low complexity. One can recognise a PX domain in the interval 226–343 (ADSVTLAIVP…TFVTLRNDIS (118 aa)). A 1,2-diacyl-sn-glycero-3-phospho-(1D-myo-inositol-3-phosphate) contacts are provided by Arg264, Ser266, Lys290, and Arg309.

This sequence belongs to the sorting nexin family.

It is found in the cytoplasm. The protein localises to the membrane. Its function is as follows. Required for vacuolar protein sorting. The chain is Sorting nexin MVP1 (MVP1) from Yarrowia lipolytica (strain CLIB 122 / E 150) (Yeast).